The following is a 272-amino-acid chain: Putative phosphoenolpyruvate synthase regulatory protein (272 aa).

152-159 (GVSRCGKT) is an ADP binding site.

The protein belongs to the pyruvate, phosphate/water dikinase regulatory protein family. PSRP subfamily.

It catalyses the reaction [pyruvate, water dikinase] + ADP = [pyruvate, water dikinase]-phosphate + AMP + H(+). The catalysed reaction is [pyruvate, water dikinase]-phosphate + phosphate + H(+) = [pyruvate, water dikinase] + diphosphate. In terms of biological role, bifunctional serine/threonine kinase and phosphorylase involved in the regulation of the phosphoenolpyruvate synthase (PEPS) by catalyzing its phosphorylation/dephosphorylation. This Ectopseudomonas mendocina (strain ymp) (Pseudomonas mendocina) protein is Putative phosphoenolpyruvate synthase regulatory protein.